Reading from the N-terminus, the 195-residue chain is Elongation factor Ts (195 aa).

The tract at residues 81–84 (TDFV) is involved in Mg(2+) ion dislocation from EF-Tu.

It belongs to the EF-Ts family.

Its subcellular location is the cytoplasm. Its function is as follows. Associates with the EF-Tu.GDP complex and induces the exchange of GDP to GTP. It remains bound to the aminoacyl-tRNA.EF-Tu.GTP complex up to the GTP hydrolysis stage on the ribosome. The sequence is that of Elongation factor Ts from Rubrobacter xylanophilus (strain DSM 9941 / JCM 11954 / NBRC 16129 / PRD-1).